A 571-amino-acid polypeptide reads, in one-letter code: 5' exonuclease Apollo (571 aa).

Disordered stretches follow at residues 346–386 (TSRP…TDRN) and 431–487 (MDDN…SMHD). Composition is skewed to basic and acidic residues over residues 367-386 (NHDDMDSNDTEIDHDTTDRN) and 453-468 (ECDHESPTKSSKEKSP). The segment covering 470–487 (MGSTNSGEMCSSMDSMHD) has biased composition (polar residues). The TBM motif lies at 501-532 (NPQSVTSAIPITLESEQFEHWLLENFTIPAEE).

Belongs to the DNA repair metallo-beta-lactamase (DRMBL) family. As to quaternary structure, interacts with terf2; the interaction is direct.

It localises to the chromosome. It is found in the telomere. Its subcellular location is the nucleus. The catalysed reaction is a beta-lactam + H2O = a substituted beta-amino acid. Functionally, 5'-3' exonuclease that plays a central role in telomere maintenance and protection during S-phase. Participates in the protection of telomeres against non-homologous end-joining (NHEJ)-mediated repair, thereby ensuring that telomeres do not fuse. Plays a key role in telomeric loop (T loop) formation by being recruited by terf2 at the leading end telomeres and by processing leading-end telomeres immediately after their replication via its exonuclease activity: generates 3' single-stranded overhang at the leading end telomeres avoiding blunt leading-end telomeres that are vulnerable to end-joining reactions and expose the telomere end in a manner that activates the DNA repair pathways. Possesses beta-lactamase activity, catalyzing the hydrolysis of penicillin G and nitrocefin. Exhibits no activity towards other beta-lactam antibiotic classes including cephalosporins (cefotaxime) and carbapenems (imipenem). The sequence is that of 5' exonuclease Apollo (dclre1b) from Danio rerio (Zebrafish).